A 100-amino-acid chain; its full sequence is Small ribosomal subunit protein uS14c (100 aa).

This sequence belongs to the universal ribosomal protein uS14 family. In terms of assembly, part of the 30S ribosomal subunit.

The protein localises to the plastid. It localises to the chloroplast. In terms of biological role, binds 16S rRNA, required for the assembly of 30S particles. In Citrus sinensis (Sweet orange), this protein is Small ribosomal subunit protein uS14c.